Consider the following 201-residue polypeptide: Charged multivesicular body protein 6 (201 aa).

Residue G2 is the site of N-myristoyl glycine attachment. Residues 10-145 adopt a coiled-coil conformation; sequence QSRVTEQDKA…YQRQIDELLA (136 aa). A Phosphoserine modification is found at S119. T130 is modified (phosphothreonine). Residues 168-179 carry the Type-2 MIT-interacting motif motif; the sequence is IELPEVPSEPLP. Positions 171–201 are disordered; it reads PEVPSEPLPEKIPEDVPVKARPRQAELVAAS. Residues 178–188 are compositionally biased toward basic and acidic residues; it reads LPEKIPEDVPV.

This sequence belongs to the SNF7 family. Probable core component of the endosomal sorting required for transport complex III (ESCRT-III). ESCRT-III components are thought to multimerize to form a flat lattice on the perimeter membrane of the endosome. Several assembly forms of ESCRT-III may exist that interact and act sequentially. Interacts with VPS4A; the interaction is direct. Interacts with VPS4B; the interaction is direct. Interacts with CHMP4A, CHMP4B and CHMP4C. Interacts with SNF8, VPS25 and VPS36. In terms of processing, ISGylated in a CHMP5-dependent manner. Isgylation weakens its interaction with VPS4A.

Its subcellular location is the endomembrane system. The protein localises to the endosome membrane. It localises to the late endosome membrane. It is found in the membrane. Its function is as follows. Probable core component of the endosomal sorting required for transport complex III (ESCRT-III) which is involved in multivesicular bodies (MVBs) formation and sorting of endosomal cargo proteins into MVBs. MVBs contain intraluminal vesicles (ILVs) that are generated by invagination and scission from the limiting membrane of the endosome and mostly are delivered to lysosomes enabling degradation of membrane proteins, such as stimulated growth factor receptors, lysosomal enzymes and lipids. The MVB pathway appears to require the sequential function of ESCRT-O, -I,-II and -III complexes. ESCRT-III proteins mostly dissociate from the invaginating membrane before the ILV is released. The ESCRT machinery also functions in topologically equivalent membrane fission events, such as the terminal stages of cytokinesis and the budding of enveloped viruses (lentiviruses). ESCRT-III proteins are believed to mediate the necessary vesicle extrusion and/or membrane fission activities, possibly in conjunction with the AAA ATPase VPS4. In the ESCRT-III complex, it probably serves as an acceptor for the ESCRT-II complex on endosomal membrane. This Pongo abelii (Sumatran orangutan) protein is Charged multivesicular body protein 6 (CHMP6).